Here is a 346-residue protein sequence, read N- to C-terminus: Uroporphyrinogen decarboxylase (346 aa).

Substrate is bound by residues Arg23–Arg27, Asp73, Tyr151, Ser206, and His321.

It belongs to the uroporphyrinogen decarboxylase family. In terms of assembly, homodimer.

The protein resides in the cytoplasm. The catalysed reaction is uroporphyrinogen III + 4 H(+) = coproporphyrinogen III + 4 CO2. It functions in the pathway porphyrin-containing compound metabolism; protoporphyrin-IX biosynthesis; coproporphyrinogen-III from 5-aminolevulinate: step 4/4. In terms of biological role, catalyzes the decarboxylation of four acetate groups of uroporphyrinogen-III to yield coproporphyrinogen-III. The protein is Uroporphyrinogen decarboxylase of Aliarcobacter butzleri (strain RM4018) (Arcobacter butzleri).